The chain runs to 217 residues: ITG-like peptide (217 aa).

An N-terminal signal peptide occupies residues 1–21 (MHRTMAVTAVLVLSAAGAAHA). Positions 22–208 (WGGLFNRFSS…REFVQHTAGE (187 aa)) are excised as a propeptide.

As to expression, ITG-like peptide: Expressed in corpora cardiaca (CC), corpora allata (CA), antennal lobe (AL) and gnathal ganglion (GNG) (at protein level). Expression in AL detected in all animals, expression in GNG detected in most animals and in CA and CC detected in few animals (at protein level).

It localises to the secreted. The chain is ITG-like peptide from Agrotis ipsilon (Black cutworm moth).